The sequence spans 175 residues: Crossover junction endodeoxyribonuclease RuvC (175 aa).

Catalysis depends on residues Asp-16, Glu-76, and Asp-148. Positions 16, 76, and 148 each coordinate Mg(2+).

The protein belongs to the RuvC family. In terms of assembly, homodimer which binds Holliday junction (HJ) DNA. The HJ becomes 2-fold symmetrical on binding to RuvC with unstacked arms; it has a different conformation from HJ DNA in complex with RuvA. In the full resolvosome a probable DNA-RuvA(4)-RuvB(12)-RuvC(2) complex forms which resolves the HJ. The cofactor is Mg(2+).

Its subcellular location is the cytoplasm. It carries out the reaction Endonucleolytic cleavage at a junction such as a reciprocal single-stranded crossover between two homologous DNA duplexes (Holliday junction).. The RuvA-RuvB-RuvC complex processes Holliday junction (HJ) DNA during genetic recombination and DNA repair. Endonuclease that resolves HJ intermediates. Cleaves cruciform DNA by making single-stranded nicks across the HJ at symmetrical positions within the homologous arms, yielding a 5'-phosphate and a 3'-hydroxyl group; requires a central core of homology in the junction. The consensus cleavage sequence is 5'-(A/T)TT(C/G)-3'. Cleavage occurs on the 3'-side of the TT dinucleotide at the point of strand exchange. HJ branch migration catalyzed by RuvA-RuvB allows RuvC to scan DNA until it finds its consensus sequence, where it cleaves and resolves the cruciform DNA. The sequence is that of Crossover junction endodeoxyribonuclease RuvC from Bradyrhizobium sp. (strain BTAi1 / ATCC BAA-1182).